The sequence spans 318 residues: NADH-ubiquinone oxidoreductase chain 1 (318 aa).

Helical transmembrane passes span 3–23 (LINVLSLIIPILLAVAFLTLL), 69–89 (LMFTLAPTLALTLALSLWIPI), 100–120 (LGVLFILAMSSLAVYSILWSG), 135–155 (AVAQTISYEVTLAIILLSIMM), 171–191 (HMWLIFPLWPLAMMWFISTLA), 223–243 (FFLAEYANIIMMNALTAILFF), 253–273 (ELHTLNLITKTLILTMMFLWV), and 293–313 (FLPLTLALCMLHVSAPATFAG).

It belongs to the complex I subunit 1 family.

The protein resides in the mitochondrion inner membrane. The enzyme catalyses a ubiquinone + NADH + 5 H(+)(in) = a ubiquinol + NAD(+) + 4 H(+)(out). In terms of biological role, core subunit of the mitochondrial membrane respiratory chain NADH dehydrogenase (Complex I) that is believed to belong to the minimal assembly required for catalysis. Complex I functions in the transfer of electrons from NADH to the respiratory chain. The immediate electron acceptor for the enzyme is believed to be ubiquinone. The sequence is that of NADH-ubiquinone oxidoreductase chain 1 (MT-ND1) from Dasypus novemcinctus (Nine-banded armadillo).